Reading from the N-terminus, the 279-residue chain is Formamidopyrimidine-DNA glycosylase (279 aa).

The active-site Schiff-base intermediate with DNA is P2. Residue E3 is the Proton donor of the active site. The Proton donor; for beta-elimination activity role is filled by K57. Residues H90, R109, and R151 each contribute to the DNA site. The segment at 236 to 270 adopts an FPG-type zinc-finger fold; it reads FVYGRTGQPCRVCQTPIAVLRLGQRSTFYCPACQQ. R260 (proton donor; for delta-elimination activity) is an active-site residue.

The protein belongs to the FPG family. Monomer. Zn(2+) serves as cofactor.

The enzyme catalyses Hydrolysis of DNA containing ring-opened 7-methylguanine residues, releasing 2,6-diamino-4-hydroxy-5-(N-methyl)formamidopyrimidine.. It catalyses the reaction 2'-deoxyribonucleotide-(2'-deoxyribose 5'-phosphate)-2'-deoxyribonucleotide-DNA = a 3'-end 2'-deoxyribonucleotide-(2,3-dehydro-2,3-deoxyribose 5'-phosphate)-DNA + a 5'-end 5'-phospho-2'-deoxyribonucleoside-DNA + H(+). Functionally, involved in base excision repair of DNA damaged by oxidation or by mutagenic agents. Acts as a DNA glycosylase that recognizes and removes damaged bases. Has a preference for oxidized purines, such as 7,8-dihydro-8-oxoguanine (8-oxoG). Has AP (apurinic/apyrimidinic) lyase activity and introduces nicks in the DNA strand. Cleaves the DNA backbone by beta-delta elimination to generate a single-strand break at the site of the removed base with both 3'- and 5'-phosphates. The sequence is that of Formamidopyrimidine-DNA glycosylase from Methylobacillus flagellatus (strain ATCC 51484 / DSM 6875 / VKM B-1610 / KT).